The primary structure comprises 502 residues: MTHHPDELEIWFLTGSQHLYGPEVIDQVAEHAARIVAALDASPHLPVRVVSKPVLTETDSIRRALLDATATDSCVGVIAWMHTFSPAKMWITGLDALRKPLLHLHTQANQALPWAEIDMDFMNLNQAAHGDREFASVQTRMGVARKTVTGHVEDPEVARRIGLWARAALGRHALAGMRLARFGDNMRNVAVTEGDKVEAERRFGVSVNTWGVNDLVAVVDEVADADVDKLCEEYADSYDVAAELLPSGERHESLRYGARIELGLRSFLTEGGFTAFTSNFEDLGGLRQLPGLAVQRLMADGYGFGGEGDWKTSVLLRTLKVVADGLPGGTSFMEDYTYHLVPGEERILGAHMLEVCPSIAEGRPSLEIHPLSIGGREDPVRLVFDAAPGPAVLLGLADLGERFRFVGNEVEVVAPTEPLPNLPVARAVWRPAPDLRTSTEAWLMAGGPHHTVLSTALGAEHLDDLAEMTGTELVLVDADTTIRGLAKELRWSAAYHRLAQGL.

4 residues coordinate Mn(2+): E307, E334, H351, and H450.

It belongs to the arabinose isomerase family. The cofactor is Mn(2+).

It carries out the reaction beta-L-arabinopyranose = L-ribulose. It participates in carbohydrate degradation; L-arabinose degradation via L-ribulose; D-xylulose 5-phosphate from L-arabinose (bacterial route): step 1/3. Functionally, catalyzes the conversion of L-arabinose to L-ribulose. The protein is L-arabinose isomerase of Nocardioides sp. (strain ATCC BAA-499 / JS614).